The sequence spans 221 residues: Small ribosomal subunit protein uS3 (221 aa).

Residues Ile39–Lys108 form the KH type-2 domain.

The protein belongs to the universal ribosomal protein uS3 family. In terms of assembly, part of the 30S ribosomal subunit. Forms a tight complex with proteins S10 and S14.

Its function is as follows. Binds the lower part of the 30S subunit head. Binds mRNA in the 70S ribosome, positioning it for translation. This chain is Small ribosomal subunit protein uS3, found in Clostridium botulinum (strain Alaska E43 / Type E3).